We begin with the raw amino-acid sequence, 298 residues long: Probable 3-mercaptopyruvate sulfurtransferase (298 aa).

Residues Asn-24 to Thr-141 enclose the Rhodanese 1 domain. The segment at Gly-142–Pro-175 is hinge. Ser-164 bears the Phosphoserine mark. Residues Asp-176–Ser-292 enclose the Rhodanese 2 domain. Substrate is bound at residue Arg-190. The active-site Cysteine persulfide intermediate is the Cys-252.

The protein resides in the mitochondrion. The catalysed reaction is 2-oxo-3-sulfanylpropanoate + [thioredoxin]-dithiol = [thioredoxin]-disulfide + hydrogen sulfide + pyruvate + H(+). Functionally, required for formation of the 2-thio group of the 5-methoxycarbonylmethyl-2-thiouridine modified base in some tRNAs. The protein is Probable 3-mercaptopyruvate sulfurtransferase (tum1) of Schizosaccharomyces pombe (strain 972 / ATCC 24843) (Fission yeast).